Reading from the N-terminus, the 393-residue chain is NADH-quinone oxidoreductase subunit D 2 (393 aa).

Belongs to the complex I 49 kDa subunit family. As to quaternary structure, NDH-1 is composed of 14 different subunits. Subunits NuoB, C, D, E, F, and G constitute the peripheral sector of the complex.

The protein resides in the cell inner membrane. It catalyses the reaction a quinone + NADH + 5 H(+)(in) = a quinol + NAD(+) + 4 H(+)(out). Functionally, NDH-1 shuttles electrons from NADH, via FMN and iron-sulfur (Fe-S) centers, to quinones in the respiratory chain. The immediate electron acceptor for the enzyme in this species is believed to be a menaquinone. Couples the redox reaction to proton translocation (for every two electrons transferred, four hydrogen ions are translocated across the cytoplasmic membrane), and thus conserves the redox energy in a proton gradient. The chain is NADH-quinone oxidoreductase subunit D 2 from Cytophaga hutchinsonii (strain ATCC 33406 / DSM 1761 / CIP 103989 / NBRC 15051 / NCIMB 9469 / D465).